Here is a 197-residue protein sequence, read N- to C-terminus: Imidazoleglycerol-phosphate dehydratase (197 aa).

It belongs to the imidazoleglycerol-phosphate dehydratase family.

The protein resides in the cytoplasm. The enzyme catalyses D-erythro-1-(imidazol-4-yl)glycerol 3-phosphate = 3-(imidazol-4-yl)-2-oxopropyl phosphate + H2O. It participates in amino-acid biosynthesis; L-histidine biosynthesis; L-histidine from 5-phospho-alpha-D-ribose 1-diphosphate: step 6/9. This is Imidazoleglycerol-phosphate dehydratase from Cellvibrio japonicus (strain Ueda107) (Pseudomonas fluorescens subsp. cellulosa).